The primary structure comprises 216 residues: Adenylate kinase (216 aa).

An ATP-binding site is contributed by 10-15 (GAGKGT). Positions 30–59 (STGDIFRKNISEKTPLGVKAKEYMDKGQLV) are NMP. AMP is bound by residues Thr31, Arg36, 57 to 59 (QLV), 85 to 88 (GFPR), and Gln92. An LID region spans residues 126-163 (GRRVCPSCGASYHIKFNPPKIEGLCDVCKKEVIQRKDD). ATP is bound at residue Arg127. Residues Cys130 and Cys133 each contribute to the Zn(2+) site. Residue 136-137 (SY) participates in ATP binding. Residues Cys150 and Cys153 each contribute to the Zn(2+) site. AMP contacts are provided by Arg160 and Arg171. Gln199 is a binding site for ATP.

It belongs to the adenylate kinase family. In terms of assembly, monomer.

The protein resides in the cytoplasm. The enzyme catalyses AMP + ATP = 2 ADP. Its pathway is purine metabolism; AMP biosynthesis via salvage pathway; AMP from ADP: step 1/1. In terms of biological role, catalyzes the reversible transfer of the terminal phosphate group between ATP and AMP. Plays an important role in cellular energy homeostasis and in adenine nucleotide metabolism. In Clostridium novyi (strain NT), this protein is Adenylate kinase.